Reading from the N-terminus, the 233-residue chain is ATP-dependent dethiobiotin synthetase BioD (233 aa).

12-17 (EVGKTY) lines the ATP pocket. Thr-16 contacts Mg(2+). The active site involves Lys-37. Residues Asp-54, 120-123 (EGAG), and 186-187 (ND) each bind ATP. Asp-54 and Glu-120 together coordinate Mg(2+).

It belongs to the dethiobiotin synthetase family. In terms of assembly, homodimer. It depends on Mg(2+) as a cofactor.

Its subcellular location is the cytoplasm. The enzyme catalyses (7R,8S)-7,8-diammoniononanoate + CO2 + ATP = (4R,5S)-dethiobiotin + ADP + phosphate + 3 H(+). Its pathway is cofactor biosynthesis; biotin biosynthesis; biotin from 7,8-diaminononanoate: step 1/2. Catalyzes a mechanistically unusual reaction, the ATP-dependent insertion of CO2 between the N7 and N8 nitrogen atoms of 7,8-diaminopelargonic acid (DAPA, also called 7,8-diammoniononanoate) to form a ureido ring. The chain is ATP-dependent dethiobiotin synthetase BioD from Alteromonas mediterranea (strain DSM 17117 / CIP 110805 / LMG 28347 / Deep ecotype).